We begin with the raw amino-acid sequence, 648 residues long: Threonine--tRNA ligase (648 aa).

The TGS domain occupies 1–61 (MINITFPDGA…TEDGSIEIVT (61 aa)). Residues 242 to 540 (DHRKLGKELD…LIENYKGAFP (299 aa)) form a catalytic region. Residues Cys-336, His-387, and His-517 each contribute to the Zn(2+) site.

Belongs to the class-II aminoacyl-tRNA synthetase family. In terms of assembly, homodimer. It depends on Zn(2+) as a cofactor.

The protein localises to the cytoplasm. The enzyme catalyses tRNA(Thr) + L-threonine + ATP = L-threonyl-tRNA(Thr) + AMP + diphosphate + H(+). Catalyzes the attachment of threonine to tRNA(Thr) in a two-step reaction: L-threonine is first activated by ATP to form Thr-AMP and then transferred to the acceptor end of tRNA(Thr). Also edits incorrectly charged L-seryl-tRNA(Thr). This chain is Threonine--tRNA ligase, found in Streptococcus thermophilus (strain ATCC BAA-250 / LMG 18311).